The chain runs to 61 residues: Protein translocase subunit SecE (61 aa).

A helical transmembrane segment spans residues 38-58 (GIGMILIGLIGLVIRMIGYLI).

Belongs to the SecE/SEC61-gamma family. As to quaternary structure, component of the Sec protein translocase complex. Heterotrimer consisting of SecY (alpha), SecG (beta) and SecE (gamma) subunits. The heterotrimers can form oligomers, although 1 heterotrimer is thought to be able to translocate proteins. Interacts with the ribosome. May interact with SecDF, and other proteins may be involved.

The protein resides in the cell membrane. Its function is as follows. Essential subunit of the Sec protein translocation channel SecYEG. Clamps together the 2 halves of SecY. May contact the channel plug during translocation. This chain is Protein translocase subunit SecE, found in Thermococcus onnurineus (strain NA1).